The chain runs to 282 residues: E3 ubiquitin-protein ligase SIAH1B (282 aa).

Residues 1 to 17 (MSRQAATALSTGTSKCP) are compositionally biased toward polar residues. The disordered stretch occupies residues 1 to 23 (MSRQAATALSTGTSKCPPSQRVP). The residue at position 19 (Ser19) is a Phosphoserine; by ATM and ATR. An RING-type zinc finger spans residues 41 to 76 (CPVCFDYVLPPILQCQSGHLVCSNCRPKLTCCPTCR). The interval 90–282 (VANSVLFPCK…LGINVTISMC (193 aa)) is SBD. An SIAH-type zinc finger spans residues 93 to 153 (SVLFPCKYSA…VMPHLMHQHK (61 aa)). Zn(2+) is bound by residues Cys98, Cys105, His117, Cys121, Cys128, Cys135, His147, and His152.

It belongs to the SINA (Seven in absentia) family. In terms of assembly, homodimer. Post-translationally, phosphorylated on Ser-19 by ATM and ATR. Widely expressed at low level in embryos and adults. Due to the high similarity between SIAH1A and SIAH1B, it is difficult to distinguish its own tissue specificity. Overexpressed in endothelial cells of adult lung.

It is found in the cytoplasm. Its subcellular location is the nucleus. The catalysed reaction is S-ubiquitinyl-[E2 ubiquitin-conjugating enzyme]-L-cysteine + [acceptor protein]-L-lysine = [E2 ubiquitin-conjugating enzyme]-L-cysteine + N(6)-ubiquitinyl-[acceptor protein]-L-lysine.. It participates in protein modification; protein ubiquitination. Functionally, E3 ubiquitin-protein ligase that mediates ubiquitination and subsequent proteasomal degradation of target proteins. E3 ubiquitin ligases accept ubiquitin from an E2 ubiquitin-conjugating enzyme in the form of a thioester and then directly transfers the ubiquitin to targeted substrates. Mediates E3 ubiquitin ligase activity either through direct binding to substrates or by functioning as the essential RING domain subunit of larger E3 complexes. The sequence is that of E3 ubiquitin-protein ligase SIAH1B (Siah1b) from Mus musculus (Mouse).